Reading from the N-terminus, the 424-residue chain is Enolase (424 aa).

Gln165 lines the (2R)-2-phosphoglycerate pocket. Glu207 functions as the Proton donor in the catalytic mechanism. Mg(2+) contacts are provided by Asp244, Glu283, and Asp310. (2R)-2-phosphoglycerate is bound by residues Lys335, Arg364, Ser365, and Lys386. Lys335 (proton acceptor) is an active-site residue.

The protein belongs to the enolase family. Requires Mg(2+) as cofactor.

Its subcellular location is the cytoplasm. The protein localises to the secreted. It is found in the cell surface. The catalysed reaction is (2R)-2-phosphoglycerate = phosphoenolpyruvate + H2O. It participates in carbohydrate degradation; glycolysis; pyruvate from D-glyceraldehyde 3-phosphate: step 4/5. Its function is as follows. Catalyzes the reversible conversion of 2-phosphoglycerate (2-PG) into phosphoenolpyruvate (PEP). It is essential for the degradation of carbohydrates via glycolysis. The protein is Enolase of Chlamydia trachomatis serovar L2 (strain ATCC VR-902B / DSM 19102 / 434/Bu).